The sequence spans 536 residues: Hydroxylamine oxidoreductase (536 aa).

A signal peptide spans 1 to 26; sequence MFEIFKKPLSRIVGATFAFAGVTLLA. The heme c site is built by C116, C119, H120, H136, C160, C163, H164, H168, C179, C182, H183, H198, C223, C226, H227, C234, C237, H238, H241, C254, C257, and H258. H263 contributes to the hydroxylamine binding site. Residues H274, C301, C304, H305, H311, C346, C349, H350, H443, and Y451 each coordinate heme c.

As to quaternary structure, homotrimer; subunits are linked by two covalent bonds between Tyr-451 of one subunit and heme P460 of an adjacent subunit. The cofactor is heme c.

The protein localises to the anammoxosome. It catalyses the reaction hydroxylamine + 3 Fe(III)-[cytochrome c] = nitric oxide + 3 Fe(II)-[cytochrome c] + 3 H(+). Its function is as follows. Catalyzes the oxidation of hydroxylamine to nitric oxide with cytochrome c acting as an electron acceptor. Does not oxidize hydroxylamine to nitrite. Also able to catalyze the four-electron oxidation of hydrazine to N(2) in vitro with reduced efficiency; however, this reaction is probably not physiological. This chain is Hydroxylamine oxidoreductase, found in Kuenenia stuttgartiensis.